We begin with the raw amino-acid sequence, 252 residues long: Thiazole synthase (252 aa).

K91 (schiff-base intermediate with DXP) is an active-site residue. Residues G152, 179–180 (AG), and 201–202 (NT) contribute to the 1-deoxy-D-xylulose 5-phosphate site.

The protein belongs to the ThiG family. Homotetramer. Forms heterodimers with either ThiH or ThiS.

Its subcellular location is the cytoplasm. The enzyme catalyses [ThiS sulfur-carrier protein]-C-terminal-Gly-aminoethanethioate + 2-iminoacetate + 1-deoxy-D-xylulose 5-phosphate = [ThiS sulfur-carrier protein]-C-terminal Gly-Gly + 2-[(2R,5Z)-2-carboxy-4-methylthiazol-5(2H)-ylidene]ethyl phosphate + 2 H2O + H(+). It functions in the pathway cofactor biosynthesis; thiamine diphosphate biosynthesis. In terms of biological role, catalyzes the rearrangement of 1-deoxy-D-xylulose 5-phosphate (DXP) to produce the thiazole phosphate moiety of thiamine. Sulfur is provided by the thiocarboxylate moiety of the carrier protein ThiS. In vitro, sulfur can be provided by H(2)S. This chain is Thiazole synthase, found in Gluconobacter oxydans (strain 621H) (Gluconobacter suboxydans).